A 77-amino-acid polypeptide reads, in one-letter code: Translation initiation factor IF-1, chloroplastic (77 aa).

The region spanning 1-71 (MKEQKWIHEG…TRGRIIYRLR (71 aa)) is the S1-like domain.

The protein belongs to the IF-1 family. As to quaternary structure, component of the 30S ribosomal translation pre-initiation complex which assembles on the 30S ribosome in the order IF-2 and IF-3, IF-1 and N-formylmethionyl-tRNA(fMet); mRNA recruitment can occur at any time during PIC assembly.

It localises to the plastid. The protein localises to the chloroplast. One of the essential components for the initiation of protein synthesis. Stabilizes the binding of IF-2 and IF-3 on the 30S subunit to which N-formylmethionyl-tRNA(fMet) subsequently binds. Helps modulate mRNA selection, yielding the 30S pre-initiation complex (PIC). Upon addition of the 50S ribosomal subunit IF-1, IF-2 and IF-3 are released leaving the mature 70S translation initiation complex. This is Translation initiation factor IF-1, chloroplastic from Antirrhinum majus (Garden snapdragon).